Here is a 103-residue protein sequence, read N- to C-terminus: Putative RNA-binding protein RbpB (103 aa).

The RRM domain maps to 2–79 (SIYVGNLSYD…RDLKVNKAKP (78 aa)). Positions 74-85 (VNKAKPREDRGG) are enriched in basic and acidic residues. A disordered region spans residues 74–103 (VNKAKPREDRGGSRGSFGGNRSNNNFRNRY). The segment covering 92 to 103 (GNRSNNNFRNRY) has biased composition (low complexity).

This is Putative RNA-binding protein RbpB (rbpB) from Nostoc sp. (strain PCC 7120 / SAG 25.82 / UTEX 2576).